The following is a 376-amino-acid chain: Carbohydrate sulfotransferase 14 (376 aa).

The Cytoplasmic portion of the chain corresponds to 1–39 (MFPRPLTPLAAPNGAEPLGRALRRAPLGRARAGLGGPPL). The helical; Signal-anchor for type II membrane protein transmembrane segment at 40 to 60 (LLPSMLMFAVIVASSGLLLMI) threads the bilayer. Topologically, residues 61–376 (ERGILAEMKP…PNVTKEACQQ (316 aa)) are lumenal. An N-linked (GlcNAc...) asparagine glycan is attached at asparagine 110. 3'-phosphoadenylyl sulfate is bound by residues 155–161 (PKVACSN) and 213–221 (REPLERLLS). Asparagine 368 carries N-linked (GlcNAc...) asparagine glycosylation.

This sequence belongs to the sulfotransferase 2 family. As to expression, widely expressed. Expressed at high level in pituitary gland, placenta, uterus and thyroid.

It is found in the golgi apparatus membrane. It carries out the reaction dermatan + n 3'-phosphoadenylyl sulfate = dermatan 4'-sulfate + n adenosine 3',5'-bisphosphate + n H(+). Its function is as follows. Catalyzes the transfer of sulfate to position 4 of the N-acetylgalactosamine (GalNAc) residue of dermatan sulfate. Plays a pivotal role in the formation of 4-0-sulfated IdoA blocks in dermatan sulfate. Transfers sulfate to the C-4 hydroxyl of beta1,4-linked GalNAc that is substituted with an alpha-linked iduronic acid (IdoUA) at the C-3 hydroxyl. Transfers sulfate more efficiently to GalNAc residues in -IdoUA-GalNAc-IdoUA- than in -GlcUA-GalNAc-GlcUA-sequences. Has preference for partially desulfated dermatan sulfate. Addition of sulfate to GalNAc may occur immediately after epimerization of GlcUA to IdoUA. Appears to have an important role in the formation of the cerebellar neural network during postnatal brain development. The chain is Carbohydrate sulfotransferase 14 (CHST14) from Homo sapiens (Human).